The sequence spans 124 residues: Large ribosomal subunit protein bL12 (124 aa).

Belongs to the bacterial ribosomal protein bL12 family. Homodimer. Part of the ribosomal stalk of the 50S ribosomal subunit. Forms a multimeric L10(L12)X complex, where L10 forms an elongated spine to which 2 to 4 L12 dimers bind in a sequential fashion. Binds GTP-bound translation factors.

Forms part of the ribosomal stalk which helps the ribosome interact with GTP-bound translation factors. Is thus essential for accurate translation. The sequence is that of Large ribosomal subunit protein bL12 from Chlorobium chlorochromatii (strain CaD3).